We begin with the raw amino-acid sequence, 983 residues long: MASKESKPSRTTRRGMEPPLRETWNQVLQELVKRQQQEEEEQQGLVSGKKKSWVSIDLLGTEGKDIKKVNIWEPCEKWFAQVVWGVLWVLQIVLWGCLMWEVRKGNQCQAEEVIALVSDPGGFQRVQHVETVPVTCVTKNFTQWGCQPEGAYPDPELEYRNISREILEEVYKQDWPWNTYHWPLWQMENMRQWMKENEKEYKERTNKTKEDIDDLVAGRIRGRFCVPYPYALLRCEEWCWYPESINQETGHAEKIKINCTKAKAVSCTEKMSLAAVQRVYWEKEDEESMKFLNIKACNISLRCQDEGKSPGGCVQGYPIPKGAEIIPEAMKYLRGKKSRYGGIKDKNGELKLPLSVRVWVRMANLSGWVNGTPPYWSARINGSTGINGTRWYGIGTLHHLGCNISSNPERGICNFTGELWIGGDKFPYYYTPSWNCSQNWTGHPVWHVFRYLDMTEHMTSRCIQRPKRHNITVGNGTITGNCSVTNWDGCNCTRSGNHLYNSTSGGLLVIICRQNSTITGIMGTNTNWTTMWNIYQNCSRCNNSSLDRTGSGTLGTVNNLKCSLPHRNESNKWTCKSQRDSYIAGRDFWGKVKAKYSCESNLGGLDSMMHQQMLLQRYQVIRVRAYTYGVVEMPQSYMEAQGENKRSRRNLQRKKRGIGLVIVLAIMAIIAAAGAGLGVANAVQQSYTRTAVQSLANATAAQQEVLEASYAMVQHIAKGIRILEARVARVEALVDRMMVYQELDCWHYQHYCVTSTRSEVANYVNWTRFKDNCTWQQWEEEIEQHEGNLSLLLREAALQVHIAQRDARRIPDAWKAIQEAFNWSSWFSWLKYIPWIIMGIVGLMCFRILMCVISMCLQAYKQVKQIRYTQVTVVIEAPVELEEKQKRNGDGTNGCASLERERRTSHRSFIQIWRATWWAWKTSPWRHNWRTMPYITLLPILVIWQWMEENGWNGENQHKKKKERVDCQDREQMPTLENDYVEL.

Residues 1–20 (MASKESKPSRTTRRGMEPPL) show a composition bias toward basic and acidic residues. The interval 1 to 22 (MASKESKPSRTTRRGMEPPLRE) is disordered. The N-terminal stretch at 1-106 (MASKESKPSR…CLMWEVRKGN (106 aa)) is a signal peptide. Over 107 to 832 (QCQAEEVIAL…WSSWFSWLKY (726 aa)) the chain is Extracellular. Asn140, Asn161, Asn206, Asn258, Asn298, Asn364, Asn381, Asn387, Asn403, Asn414, Asn435, Asn439, Asn470, Asn475, Asn481, Asn491, Asn501, Asn515, Asn527, Asn537, Asn542, Asn543, and Asn568 each carry an N-linked (GlcNAc...) asparagine; by host glycan. Residues 657 to 677 (GIGLVIVLAIMAIIAAAGAGL) are fusion peptide. Residues 689–739 (RTAVQSLANATAAQQEVLEASYAMVQHIAKGIRILEARVARVEALVDRMMV) are a coiled coil. A glycan (N-linked (GlcNAc...) asparagine; by host) is linked at Asn697. Residues 723–739 (LEARVARVEALVDRMMV) are immunosuppression. 4 N-linked (GlcNAc...) asparagine; by host glycosylation sites follow: Asn765, Asn772, Asn788, and Asn822. Positions 780-815 (EEIEQHEGNLSLLLREAALQVHIAQRDARRIPDAWK) form a coiled coil. The helical transmembrane segment at 833–853 (IPWIIMGIVGLMCFRILMCVI) threads the bilayer. The Cytoplasmic segment spans residues 854–983 (SMCLQAYKQV…PTLENDYVEL (130 aa)). Cys856 carries S-palmitoyl cysteine; by host lipidation.

As to quaternary structure, the mature envelope protein (Env) consists of a trimer of SU-TM heterodimers attached by noncovalent interactions or by a labile interchain disulfide bond. In terms of processing, specific enzymatic cleavages in vivo yield mature proteins. Envelope glycoproteins are synthesized as an inactive precursor that is N-glycosylated and processed likely by host cell furin or by a furin-like protease in the Golgi to yield the mature SU and TM proteins. The cleavage site between SU and TM requires the minimal sequence [KR]-X-[KR]-R. Post-translationally, the transmembrane protein is palmitoylated.

Its subcellular location is the virion membrane. The protein localises to the host cell membrane. Functionally, the surface protein (SU) attaches the virus to the host cell by binding to its receptor. This interaction triggers the refolding of the transmembrane protein (TM) and is thought to activate its fusogenic potential by unmasking its fusion peptide. Fusion occurs at the host cell plasma membrane. Its function is as follows. The transmembrane protein (TM) acts as a class I viral fusion protein. Under the current model, the protein has at least 3 conformational states: pre-fusion native state, pre-hairpin intermediate state, and post-fusion hairpin state. During viral and target cell membrane fusion, the coiled coil regions (heptad repeats) assume a trimer-of-hairpins structure, positioning the fusion peptide in close proximity to the C-terminal region of the ectodomain. The formation of this structure appears to drive apposition and subsequent fusion of viral and target cell membranes. Membranes fusion leads to delivery of the nucleocapsid into the cytoplasm. The protein is Envelope glycoprotein gp160 (env) of Maedi visna virus (strain KV1772) (MVV).